The primary structure comprises 655 residues: Very long-chain specific acyl-CoA dehydrogenase, mitochondrial (655 aa).

The N-terminal 40 residues, 1-40 (MQAARIAPSLGRQLLRFGGGSSRPTALLGQPWPGPARRPY), are a transit peptide targeting the mitochondrion. A catalytic region spans residues 41–482 (AGGAAQLALD…ALQGCMDKGK (442 aa)). The residue at position 51 (Lys-51) is an N6-acetyllysine. Lys-71 is subject to N6-acetyllysine; alternate. Lys-71 is subject to N6-succinyllysine; alternate. Lys-195 is modified (N6-succinyllysine). 214 to 223 (FCLTEPSSGS) lines the FAD pocket. The residue at position 237 (Cys-237) is an S-nitrosocysteine. Lys-239 is modified (N6-acetyllysine; alternate). Lys-239 carries the N6-succinyllysine; alternate modification. An FAD-binding site is contributed by 249 to 251 (WIS). Lys-276 and Lys-278 each carry N6-acetyllysine; alternate. N6-succinyllysine; alternate occurs at positions 276 and 278. Lys-298 carries the post-translational modification N6-acetyllysine. Lys-331 carries the post-translational modification N6-acetyllysine; alternate. Lys-331 carries the N6-succinyllysine; alternate modification. Lys-372 carries the N6-succinyllysine modification. 461–463 (FEG) provides a ligand contact to substrate. Catalysis depends on Glu-462, which acts as the Proton acceptor. Residue 464–466 (TND) participates in FAD binding. N6-acetyllysine; alternate is present on Lys-482. Lys-482 is modified (N6-succinyllysine; alternate). The membrane-anchoring stretch occupies residues 483–516 (ELSGLGSALKNPFGNAGLLLGEAGKQLRRRAGLG). Phosphoserine is present on residues Ser-517 and Ser-522. Lys-550 is modified (N6-acetyllysine). Lys-556 bears the N6-acetyllysine; alternate mark. Lys-556 bears the N6-succinyllysine; alternate mark. Gln-562 contacts FAD. Lys-639 is subject to N6-succinyllysine.

Belongs to the acyl-CoA dehydrogenase family. Homodimer. Homodimerizes after import into the mitochondrion. FAD is required as a cofactor. In terms of processing, S-nitrosylation at Cys-237 in liver improves catalytic efficiency.

It localises to the mitochondrion inner membrane. It catalyses the reaction a very-long-chain 2,3-saturated fatty acyl-CoA + oxidized [electron-transfer flavoprotein] + H(+) = a very-long-chain (2E)-enoyl-CoA + reduced [electron-transfer flavoprotein]. The catalysed reaction is dodecanoyl-CoA + oxidized [electron-transfer flavoprotein] + H(+) = (2E)-dodecenoyl-CoA + reduced [electron-transfer flavoprotein]. It carries out the reaction tetradecanoyl-CoA + oxidized [electron-transfer flavoprotein] + H(+) = (2E)-tetradecenoyl-CoA + reduced [electron-transfer flavoprotein]. The enzyme catalyses oxidized [electron-transfer flavoprotein] + hexadecanoyl-CoA + H(+) = (2E)-hexadecenoyl-CoA + reduced [electron-transfer flavoprotein]. It catalyses the reaction octadecanoyl-CoA + oxidized [electron-transfer flavoprotein] + H(+) = (2E)-octadecenoyl-CoA + reduced [electron-transfer flavoprotein]. The catalysed reaction is eicosanoyl-CoA + oxidized [electron-transfer flavoprotein] + H(+) = (2E)-eicosenoyl-CoA + reduced [electron-transfer flavoprotein]. It carries out the reaction docosanoyl-CoA + oxidized [electron-transfer flavoprotein] + H(+) = (2E)-docosenoyl-CoA + reduced [electron-transfer flavoprotein]. The enzyme catalyses tetracosanoyl-CoA + oxidized [electron-transfer flavoprotein] + H(+) = (2E)-tetracosenoyl-CoA + reduced [electron-transfer flavoprotein]. The protein operates within lipid metabolism; mitochondrial fatty acid beta-oxidation. Very long-chain specific acyl-CoA dehydrogenase is one of the acyl-CoA dehydrogenases that catalyze the first step of mitochondrial fatty acid beta-oxidation, an aerobic process breaking down fatty acids into acetyl-CoA and allowing the production of energy from fats. The first step of fatty acid beta-oxidation consists in the removal of one hydrogen from C-2 and C-3 of the straight-chain fatty acyl-CoA thioester, resulting in the formation of trans-2-enoyl-CoA. Among the different mitochondrial acyl-CoA dehydrogenases, very long-chain specific acyl-CoA dehydrogenase acts specifically on acyl-CoAs with saturated 12 to 24 carbons long primary chains. The polypeptide is Very long-chain specific acyl-CoA dehydrogenase, mitochondrial (Macaca fascicularis (Crab-eating macaque)).